We begin with the raw amino-acid sequence, 351 residues long: MDLHLIGFLLWFFVVQVTTSSAHRNITTTIPALIVFGDSIMDTGNNNDIPTLLKSNFPPYGRDFPGAIPTGRFSDGKVPSDIIAESLGIAKTLPPYLGSNLKPHDLLKGVIFASGGSGYDPLTSTLLSVVSMSDQLKYFQEYLAKIKQHFGEEKVKFILEKSVFLVVSSSNDLAETYWVRSVEYDRNSYAEYLVELASEFIKELSELGAKNIGLFSGVPVGCLPAQRTLFGGFERKCYEKLNNMALHFNSKLSSSLDTLKKELPSRLIFIDVYDTLLDIIKNPTNYGFKVADKGCCGTGKIELMELCNKFTPFTCSDASTHVFFDSYHPSEKAYQIITHKLLAKYRKYLNT.

Residues 1–22 (MDLHLIGFLLWFFVVQVTTSSA) form the signal peptide. Residue asparagine 25 is glycosylated (N-linked (GlcNAc...) asparagine). Serine 39 serves as the catalytic Nucleophile. Catalysis depends on residues aspartate 325 and histidine 328.

Belongs to the 'GDSL' lipolytic enzyme family.

The protein localises to the secreted. The protein is GDSL esterase/lipase At3g14820 of Arabidopsis thaliana (Mouse-ear cress).